Here is a 534-residue protein sequence, read N- to C-terminus: UDP-glucuronosyltransferase 2A3 (534 aa).

The first 18 residues, methionine 1–alanine 18, serve as a signal peptide directing secretion. The Extracellular portion of the chain corresponds to glycine 19 to valine 493. N-linked (GlcNAc...) asparagine glycosylation is present at asparagine 102. Lysine 135 carries the post-translational modification N6-succinyllysine. A glycan (N-linked (GlcNAc...) asparagine) is linked at asparagine 204. The helical transmembrane segment at isoleucine 494–phenylalanine 514 threads the bilayer. Over valine 515–asparagine 534 the chain is Cytoplasmic.

This sequence belongs to the UDP-glycosyltransferase family. As to expression, highly expressed in liver, with lower levels in duodenum and jejunum.

Its subcellular location is the membrane. It carries out the reaction glucuronate acceptor + UDP-alpha-D-glucuronate = acceptor beta-D-glucuronoside + UDP + H(+). Functionally, UDP-glucuronosyltransferases catalyze phase II biotransformation reactions in which lipophilic substrates are conjugated with glucuronic acid to increase water solubility and enhance excretion. They are of major importance in the conjugation and subsequent elimination of potentially toxic xenobiotics and endogenous compounds. The sequence is that of UDP-glucuronosyltransferase 2A3 (Ugt2a3) from Mus musculus (Mouse).